Consider the following 127-residue polypeptide: Major sperm protein 2 (127 aa).

Residue Ala2 is modified to N-acetylalanine. The 118-residue stretch at 9-126 (DIHTQPGSKI…RRKNLPIEYN (118 aa)) folds into the MSP domain.

Sperm.

It is found in the cell projection. The protein resides in the pseudopodium. Its subcellular location is the cytoplasm. It localises to the cytoskeleton. Central component in molecular interactions underlying sperm crawling. Forms an extensive filament system that extends from sperm villipoda, along the leading edge of the pseudopod. This Onchocerca volvulus protein is Major sperm protein 2.